The sequence spans 353 residues: Photosystem II D2 protein (353 aa).

Residue T2 is modified to N-acetylthreonine. T2 bears the Phosphothreonine mark. The helical transmembrane segment at 41 to 61 (CAYFAIGGWFTGTTFVTSWYT) threads the bilayer. H118 is a chlorophyll a binding site. The chain crosses the membrane as a helical span at residues 125–141 (GFMLRQFELARSVQLRP). Q130 and N143 together coordinate pheophytin a. The helical transmembrane segment at 153-166 (VFVSVFLIYPLGQS) threads the bilayer. Position 198 (H198) interacts with chlorophyll a. A helical membrane pass occupies residues 208 to 228 (AALLCAIHGATVENTLFEDGD). A plastoquinone is bound by residues H215 and F262. H215 provides a ligand contact to Fe cation. H269 contributes to the Fe cation binding site. A helical transmembrane segment spans residues 279–295 (GLWMSALGVVGLALNLR).

The protein belongs to the reaction center PufL/M/PsbA/D family. In terms of assembly, PSII is composed of 1 copy each of membrane proteins PsbA, PsbB, PsbC, PsbD, PsbE, PsbF, PsbH, PsbI, PsbJ, PsbK, PsbL, PsbM, PsbT, PsbX, PsbY, PsbZ, Psb30/Ycf12, at least 3 peripheral proteins of the oxygen-evolving complex and a large number of cofactors. It forms dimeric complexes. The cofactor is The D1/D2 heterodimer binds P680, chlorophylls that are the primary electron donor of PSII, and subsequent electron acceptors. It shares a non-heme iron and each subunit binds pheophytin, quinone, additional chlorophylls, carotenoids and lipids. There is also a Cl(-1) ion associated with D1 and D2, which is required for oxygen evolution. The PSII complex binds additional chlorophylls, carotenoids and specific lipids..

It localises to the plastid. Its subcellular location is the chloroplast thylakoid membrane. It carries out the reaction 2 a plastoquinone + 4 hnu + 2 H2O = 2 a plastoquinol + O2. Its function is as follows. Photosystem II (PSII) is a light-driven water:plastoquinone oxidoreductase that uses light energy to abstract electrons from H(2)O, generating O(2) and a proton gradient subsequently used for ATP formation. It consists of a core antenna complex that captures photons, and an electron transfer chain that converts photonic excitation into a charge separation. The D1/D2 (PsbA/PsbD) reaction center heterodimer binds P680, the primary electron donor of PSII as well as several subsequent electron acceptors. D2 is needed for assembly of a stable PSII complex. The chain is Photosystem II D2 protein from Carica papaya (Papaya).